A 520-amino-acid polypeptide reads, in one-letter code: Anthranilate synthase component 1 (520 aa).

Residues Ser40 and 291–293 (PYM) contribute to the L-tryptophan site. 328–329 (GT) is a binding site for chorismate. Residue Glu361 coordinates Mg(2+). Chorismate-binding positions include Tyr449, Arg469, 483-485 (GAG), and Gly485. Glu498 serves as a coordination point for Mg(2+).

It belongs to the anthranilate synthase component I family. As to quaternary structure, heterotetramer consisting of two non-identical subunits: a beta subunit (TrpG) and a large alpha subunit (TrpE). Mg(2+) serves as cofactor.

The catalysed reaction is chorismate + L-glutamine = anthranilate + pyruvate + L-glutamate + H(+). It participates in amino-acid biosynthesis; L-tryptophan biosynthesis; L-tryptophan from chorismate: step 1/5. With respect to regulation, feedback inhibited by tryptophan. In terms of biological role, part of a heterotetrameric complex that catalyzes the two-step biosynthesis of anthranilate, an intermediate in the biosynthesis of L-tryptophan. In the first step, the glutamine-binding beta subunit (TrpG) of anthranilate synthase (AS) provides the glutamine amidotransferase activity which generates ammonia as a substrate that, along with chorismate, is used in the second step, catalyzed by the large alpha subunit of AS (TrpE) to produce anthranilate. In the absence of TrpG, TrpE can synthesize anthranilate directly from chorismate and high concentrations of ammonia. This chain is Anthranilate synthase component 1 (trpE), found in Buchnera aphidicola subsp. Pemphigus spyrothecae.